The sequence spans 360 residues: Magnesium-protoporphyrin IX monomethyl ester [oxidative] cyclase (360 aa).

Residues Met-1–Asp-21 form a disordered region.

Belongs to the AcsF family. Requires Fe cation as cofactor.

The enzyme catalyses Mg-protoporphyrin IX 13-monomethyl ester + 3 NADPH + 3 O2 + 2 H(+) = 3,8-divinyl protochlorophyllide a + 3 NADP(+) + 5 H2O. It functions in the pathway porphyrin-containing compound metabolism; chlorophyll biosynthesis (light-independent). Catalyzes the formation of the isocyclic ring in chlorophyll biosynthesis. Mediates the cyclase reaction, which results in the formation of divinylprotochlorophyllide (Pchlide) characteristic of all chlorophylls from magnesium-protoporphyrin IX 13-monomethyl ester (MgPMME). The chain is Magnesium-protoporphyrin IX monomethyl ester [oxidative] cyclase from Synechococcus sp. (strain CC9311).